The following is a 199-amino-acid chain: MTPKFLWLVALVALYIPPIQSLNCVYLDDSILENVKLLGSTMTGFPLRCLKDITDFKFPKEILPYIQHMKREINAVSYRISSLALTIFNLKGSIPPVTEEHWERIRSGLFKQVRQAQECFMDEEKENREHPHSEDFLTVYLELGKYFFRIKKFLINKKYSFCAWKIVTVEIRRCFIIFSKSRKLLKMISESPTFKQELK.

Residues 1–21 form the signal peptide; that stretch reads MTPKFLWLVALVALYIPPIQS. 2 disulfide bridges follow: C24/C119 and C49/C162.

The protein belongs to the alpha/beta interferon family. As to expression, expressed at low levels in peritoneal macrophages.

It localises to the secreted. May play a role in the regulation of immune cell function. This Mus musculus (Mouse) protein is Interferon kappa (Ifnk).